Consider the following 535-residue polypeptide: GMP synthase [glutamine-hydrolyzing] (535 aa).

Residues 21–211 (LIVILDFGSQ…VYHICDCEPT (191 aa)) form the Glutamine amidotransferase type-1 domain. Catalysis depends on Cys98, which acts as the Nucleophile. Residues His185 and Glu187 contribute to the active site. Positions 212–410 (WTTAAFVEEA…LGLPEEIVQR (199 aa)) constitute a GMPS ATP-PPase domain. 239–245 (SGGVDSS) provides a ligand contact to ATP.

Homodimer.

It catalyses the reaction XMP + L-glutamine + ATP + H2O = GMP + L-glutamate + AMP + diphosphate + 2 H(+). Its pathway is purine metabolism; GMP biosynthesis; GMP from XMP (L-Gln route): step 1/1. Functionally, catalyzes the synthesis of GMP from XMP. The protein is GMP synthase [glutamine-hydrolyzing] of Thermosynechococcus vestitus (strain NIES-2133 / IAM M-273 / BP-1).